We begin with the raw amino-acid sequence, 104 residues long: MRFLKALPRRAEVQYDCLDRTLETQENVNLNIRVNVKEVATWGVNTCIISLKGLDNADDRFVLPEVNTALALFPLSIAADCLLMLPCISVVMSISSVMKSVTVE.

A helical transmembrane segment spans residues 81–97 (CLLMLPCISVVMSISSV).

It localises to the cell membrane. This is an uncharacterized protein from Bacillus subtilis (strain 168).